A 188-amino-acid polypeptide reads, in one-letter code: GTP cyclohydrolase 1 (188 aa).

The Zn(2+) site is built by cysteine 78, histidine 81, and cysteine 150.

It belongs to the GTP cyclohydrolase I family. As to quaternary structure, toroid-shaped homodecamer, composed of two pentamers of five dimers.

It carries out the reaction GTP + H2O = 7,8-dihydroneopterin 3'-triphosphate + formate + H(+). Its pathway is cofactor biosynthesis; 7,8-dihydroneopterin triphosphate biosynthesis; 7,8-dihydroneopterin triphosphate from GTP: step 1/1. In Halalkalibacterium halodurans (strain ATCC BAA-125 / DSM 18197 / FERM 7344 / JCM 9153 / C-125) (Bacillus halodurans), this protein is GTP cyclohydrolase 1.